We begin with the raw amino-acid sequence, 422 residues long: MAAAAVIEFQRAQEMLVSDRAASIDILQSIVKRDIQESDEEALRVKEQSILELGGLLAKTGQAAELGGLLKYVRPFLNSISKAKAARLVRSLLDLFLDMEAATGQEVELCLECIEWAKAEKRTFLRQALEARLVSLYFDTKRYQEALQLGSQLLRELKKMDDKALLVEVQLLESKTYHALSNLPKARAALTSARTTANAIYCPPKLQAALDMQSGIIHAAEEKDWKTAYSYFYEAFEGNDSIDSPKAITALKYMLLCKIMLNTPEDVQALVSGKLALRYAGRQTEALKCVAQASKNRSLANFEKALTDYKAELRDDPIISTHLAKLYDNLLEQNLIRVIEPFSRVQIDHISSLIKLPKPEVERKLSQMILDKKFHGILDQGEGVLIIFDEPPVDKTYEAALETIQNMSKVVDSLYNKAKKLT.

The region spanning 224 to 392 is the PCI domain; it reads DWKTAYSYFY…GVLIIFDEPP (169 aa).

Belongs to the proteasome subunit S9 family. In terms of assembly, component of the 19S proteasome regulatory particle complex. The 26S proteasome consists of a 20S core particle (CP) and two 19S regulatory subunits (RP). The regulatory particle is made of a lid composed of 9 subunits including PSMD11, a base containing 6 ATPases and few additional components.

It localises to the nucleus. The protein localises to the cytoplasm. It is found in the cytosol. Functionally, component of the 26S proteasome, a multiprotein complex involved in the ATP-dependent degradation of ubiquitinated proteins. This complex plays a key role in the maintenance of protein homeostasis by removing misfolded or damaged proteins, which could impair cellular functions, and by removing proteins whose functions are no longer required. Therefore, the proteasome participates in numerous cellular processes, including cell cycle progression, apoptosis, or DNA damage repair. In the complex, PSMD11 is required for proteasome assembly. Plays a key role in increased proteasome activity in embryonic stem cells (ESCs): its high expression in ESCs promotes enhanced assembly of the 26S proteasome, followed by higher proteasome activity. The polypeptide is 26S proteasome non-ATPase regulatory subunit 11 (psmd11) (Xenopus tropicalis (Western clawed frog)).